Consider the following 126-residue polypeptide: Actin-depolymerizing factor (126 aa).

Residues 1-126 form the ADF-H domain; it reads EDNCKLKFLE…SFDIIKSRAL (126 aa).

It belongs to the actin-binding proteins ADF family. In terms of tissue distribution, preferentially in mature anther.

Functionally, actin-depolymerizing protein. Severs actin filaments (F-actin) and binds to actin monomers. This is Actin-depolymerizing factor from Brassica napus (Rape).